The sequence spans 151 residues: Large ribosomal subunit protein uL15 (151 aa).

This sequence belongs to the universal ribosomal protein uL15 family. As to quaternary structure, part of the 50S ribosomal subunit.

Its function is as follows. Binds to the 23S rRNA. This Hyperthermus butylicus (strain DSM 5456 / JCM 9403 / PLM1-5) protein is Large ribosomal subunit protein uL15.